A 1350-amino-acid chain; its full sequence is Spike glycoprotein (1350 aa).

Positions 1–12 (MTRLMCLLMSLS) are cleaved as a signal peptide. Residues 13–1295 (IFVRGFDSQF…GNYTYYNKWP (1283 aa)) lie on the Extracellular side of the membrane. Residues 21–356 (QFVDMSPASN…DDLSQLHCSY (336 aa)) form the BetaCoV S1-NTD domain. N-linked (GlcNAc...) asparagine; by host glycosylation is found at asparagine 30, asparagine 71, asparagine 111, asparagine 132, asparagine 162, asparagine 172, asparagine 227, and asparagine 241. 2 disulfides stabilise this stretch: cysteine 191–cysteine 242 and cysteine 344–cysteine 354. Asparagine 384 is a glycosylation site (N-linked (GlcNAc...) asparagine; by host). The 207-residue stretch at 386–592 (TECDFSPMLT…GTGTDSVCPM (207 aa)) folds into the BetaCoV S1-CTD domain. A disulfide bond links cysteine 388 and cysteine 412. The N-linked (GlcNAc...) asparagine; by host glycan is linked to asparagine 415. Intrachain disulfides connect cysteine 430/cysteine 483 and cysteine 442/cysteine 590. N-linked (GlcNAc...) asparagine; by host glycans are attached at residues asparagine 492, asparagine 624, asparagine 723, asparagine 762, asparagine 773, asparagine 784, and asparagine 869. 2 fusion peptide regions span residues 885–906 (SAIEDLLFDKVTIADPGYMQGY) and 904–926 (QGYDDCMKQGPQSARDLICAQYV). A disulfide bond links cysteine 909 and cysteine 922. A heptad repeat 1 region spans residues 991–1041 (QKLIANKFNQALGAMQTGFTTSNLAFSKVQDAVNANAQALSKLASELSNTF). The stretch at 1020-1064 (QDAVNANAQALSKLASELSNTFGAISSSISDILARLDTVEQDAQI) forms a coiled coil. N-linked (GlcNAc...) asparagine; by host glycans are attached at residues asparagine 1142, asparagine 1145, asparagine 1172, asparagine 1224, asparagine 1240, asparagine 1255, asparagine 1276, and asparagine 1287. The heptad repeat 2 stretch occupies residues 1245 to 1284 (GPNFAEISKINTTLLDLSDEMAILQEVVKQLNDSYIDLKE). The stretch at 1257–1285 (TLLDLSDEMAILQEVVKQLNDSYIDLKEL) forms a coiled coil. The chain crosses the membrane as a helical span at residues 1296 to 1316 (WYIWLGFIAGLVALLLCVFFL). Residues 1317–1350 (LCCTGCGTSCLGKMKCKNCCDSYEEYDVEKIHVH) are Cytoplasmic-facing. The short motif at 1348–1350 (HVH) is the KxHxx element.

It belongs to the betacoronaviruses spike protein family. In terms of assembly, homotrimer; each monomer consists of a S1 and a S2 subunit. The resulting peplomers protrude from the virus surface as spikes. Post-translationally, specific enzymatic cleavages in vivo yield mature proteins. Specific enzymatic cleavages in vivo yield mature proteins. The precursor is processed into S1 and S2 by host cell furin or another cellular protease to yield the mature S1 and S2 proteins. Additionally, a second cleavage leads to the release of a fusion peptide after viral attachment to host cell receptor. In terms of processing, the cytoplasmic Cys-rich domain is palmitoylated. Spike glycoprotein is digested within host endosomes.

Its subcellular location is the virion membrane. The protein resides in the host endoplasmic reticulum-Golgi intermediate compartment membrane. It is found in the host cell membrane. In terms of biological role, attaches the virion to the cell membrane by interacting with host receptor, initiating the infection. Mediates fusion of the virion and cellular membranes by acting as a class I viral fusion protein. Under the current model, the protein has at least three conformational states: pre-fusion native state, pre-hairpin intermediate state, and post-fusion hairpin state. During viral and target cell membrane fusion, the coiled coil regions (heptad repeats) assume a trimer-of-hairpins structure, positioning the fusion peptide in close proximity to the C-terminal region of the ectodomain. The formation of this structure appears to drive apposition and subsequent fusion of viral and target cell membranes. Its function is as follows. Acts as a viral fusion peptide which is unmasked following S2 cleavage occurring upon virus endocytosis. In Tylonycteris pachypus (Lesser bamboo bat), this protein is Spike glycoprotein.